A 32-amino-acid polypeptide reads, in one-letter code: Ovostatin (32 aa).

The isoglutamyl cysteine thioester (Cys-Gln) cross-link spans 27–30 (CGEQ).

Belongs to the protease inhibitor I39 (alpha-2-macroglobulin) family. In terms of assembly, homotetramer, which consists of two pairs of disulfide-linked chains.

The protein resides in the secreted. Its function is as follows. Is able to inhibit all four classes of proteinases by a unique 'trapping' mechanism. This protein has a peptide stretch, called the 'bait region' which contains specific cleavage sites for different proteinases. When a proteinase cleaves the bait region, a conformational change is induced in the protein which traps the proteinase. The entrapped enzyme remains active against low molecular weight substrates (activity against high molecular weight substrates is greatly reduced). Following cleavage in the bait region a thioester bond is hydrolyzed and mediates the covalent binding of the protein to the proteinase. This Anas platyrhynchos (Mallard) protein is Ovostatin.